The sequence spans 308 residues: MDIDQARLTHLQQLEAESIHIIREVAAEFENPVMLYSIGKDSAVMLHLAKKAFYPGKPPFPLMHVDTTWKFRDMIALRDKQAKENGWDLIVHVNQDGVEAGINPFTAGSAKHTDVMKTEGLKQALNRHKFDAAFGGARRDEEKSRAKERVYSFRDKNHRWDPKNQRPELWNIYNGRIDKGESIRVFPLSNWTELDIWQYIYLENIEIVPLYFAAERPVVERDGMLIMIDDERILEYLTPEEKASIQTRKVRFRTLGCYPLTGAVESEAATLPEIIQEMLLTRTSERQGRLIDHDSAGSMEKKKMEGYF.

Belongs to the PAPS reductase family. CysD subfamily. Heterodimer composed of CysD, the smaller subunit, and CysN.

The enzyme catalyses sulfate + ATP + H(+) = adenosine 5'-phosphosulfate + diphosphate. It participates in sulfur metabolism; hydrogen sulfide biosynthesis; sulfite from sulfate: step 1/3. With CysN forms the ATP sulfurylase (ATPS) that catalyzes the adenylation of sulfate producing adenosine 5'-phosphosulfate (APS) and diphosphate, the first enzymatic step in sulfur assimilation pathway. APS synthesis involves the formation of a high-energy phosphoric-sulfuric acid anhydride bond driven by GTP hydrolysis by CysN coupled to ATP hydrolysis by CysD. The sequence is that of Sulfate adenylyltransferase subunit 2 from Chromobacterium violaceum (strain ATCC 12472 / DSM 30191 / JCM 1249 / CCUG 213 / NBRC 12614 / NCIMB 9131 / NCTC 9757 / MK).